Consider the following 608-residue polypeptide: Protein transport protein SEC9 (608 aa).

2 disordered regions span residues 1 to 23 (MGFK…SMQD) and 50 to 307 (VTQK…QTAA). A compositionally biased stretch (basic and acidic residues) spans 9-21 (KKDPTESEIRESM). 2 stretches are compositionally biased toward low complexity: residues 54 to 67 (SSAA…NPYA) and 74 to 85 (SGGNPYAAAAAG). The span at 100-121 (NGGGGNGGSNSNGGSNSNGGSN) shows a compositional bias: gly residues. Over residues 122 to 134 (GSPYKMNNGGNNA) the composition is skewed to low complexity. Positions 169–183 (SKKEEAPPPLEDPRL) are enriched in basic and acidic residues. Residues 198-215 (ERDDYEPVYDVGLPEEPE) are compositionally biased toward acidic residues. Basic and acidic residues predominate over residues 241 to 260 (NVDRELEEDKTALFGPRDDP). Residues 390–452 (RFTKQQSAAS…KIAEDKAKEL (63 aa)) form the t-SNARE coiled-coil homology 1 domain. The segment at 514-533 (GEKSKHRKEMMSKYGSRPGR) is disordered. Residues 545-607 (DILEDEIDNN…HLNTARLAGI (63 aa)) form the t-SNARE coiled-coil homology 2 domain.

It belongs to the SNAP-25 family.

This is Protein transport protein SEC9 (SEC9) from Yarrowia lipolytica (strain CLIB 122 / E 150) (Yeast).